Here is a 102-residue protein sequence, read N- to C-terminus: Turripeptide OL55-like (102 aa).

Contains 8 disulfide bonds. Expressed by the venom duct.

The protein localises to the secreted. In terms of biological role, acts as a neurotoxin by inhibiting an ion channel. This chain is Turripeptide OL55-like, found in Lophiotoma acuta (Marbled turris).